The sequence spans 177 residues: Adenine phosphoribosyltransferase (177 aa).

This sequence belongs to the purine/pyrimidine phosphoribosyltransferase family. Homodimer.

The protein localises to the cytoplasm. The enzyme catalyses AMP + diphosphate = 5-phospho-alpha-D-ribose 1-diphosphate + adenine. It functions in the pathway purine metabolism; AMP biosynthesis via salvage pathway; AMP from adenine: step 1/1. Functionally, catalyzes a salvage reaction resulting in the formation of AMP, that is energically less costly than de novo synthesis. The sequence is that of Adenine phosphoribosyltransferase from Mycobacteroides abscessus (strain ATCC 19977 / DSM 44196 / CCUG 20993 / CIP 104536 / JCM 13569 / NCTC 13031 / TMC 1543 / L948) (Mycobacterium abscessus).